The primary structure comprises 229 residues: C-&gt;U-editing enzyme APOBEC-1 (229 aa).

In terms of domain architecture, CMP/dCMP-type deaminase spans 10-134; it reads VDPTLRRRIE…PRNRQGLRDL (125 aa). Residue H61 participates in Zn(2+) binding. The active-site Proton donor is the E63. Residues C93 and C96 each coordinate Zn(2+).

The protein belongs to the cytidine and deoxycytidylate deaminase family. Homodimer. Interacts with A1CF; form an mRNA editing complex. Interacts with RBM47; form an mRNA editing complex. Found in a complex with CELF2/CUGBP2 and A1CF. Interacts with HNRPAB. Interacts with SYNCRIP. Zn(2+) serves as cofactor. Expressed in the liver as well as small intestine.

The protein resides in the cytoplasm. It is found in the nucleus. The catalysed reaction is a cytidine in mRNA + H2O + H(+) = a uridine in mRNA + NH4(+). It catalyses the reaction cytidine(6666) in apoB mRNA + H2O + H(+) = uridine(6666) in apoB mRNA + NH4(+). Functionally, cytidine deaminase catalyzing the cytidine to uridine postranscriptional editing of a variety of mRNAs. Form complexes with cofactors that confer differential editing activity and selectivity. Responsible for the postranscriptional editing of a CAA codon for Gln to a UAA codon for stop in the apolipoprotein B mRNA. Also involved in CGA (Arg) to UGA (Stop) editing in the NF1 mRNA. May also play a role in the epigenetic regulation of gene expression by participating in DNA demethylation. The sequence is that of C-&gt;U-editing enzyme APOBEC-1 from Rattus norvegicus (Rat).